Reading from the N-terminus, the 101-residue chain is Small ribosomal subunit protein uS14 (101 aa).

Belongs to the universal ribosomal protein uS14 family. Part of the 30S ribosomal subunit. Contacts proteins S3 and S10.

In terms of biological role, binds 16S rRNA, required for the assembly of 30S particles and may also be responsible for determining the conformation of the 16S rRNA at the A site. This chain is Small ribosomal subunit protein uS14, found in Albidiferax ferrireducens (strain ATCC BAA-621 / DSM 15236 / T118) (Rhodoferax ferrireducens).